We begin with the raw amino-acid sequence, 149 residues long: Large ribosomal subunit protein bL9 (149 aa).

This sequence belongs to the bacterial ribosomal protein bL9 family.

In terms of biological role, binds to the 23S rRNA. This is Large ribosomal subunit protein bL9 from Xanthomonas oryzae pv. oryzae (strain MAFF 311018).